The sequence spans 436 residues: Serine--tRNA ligase (436 aa).

Residue 241–243 (TSE) participates in L-serine binding. 272–274 (RAE) contributes to the ATP binding site. An L-serine-binding site is contributed by glutamate 295. 359–362 (EISS) contacts ATP. Serine 395 is an L-serine binding site.

It belongs to the class-II aminoacyl-tRNA synthetase family. Type-1 seryl-tRNA synthetase subfamily. As to quaternary structure, homodimer. The tRNA molecule binds across the dimer.

The protein localises to the cytoplasm. The enzyme catalyses tRNA(Ser) + L-serine + ATP = L-seryl-tRNA(Ser) + AMP + diphosphate + H(+). The catalysed reaction is tRNA(Sec) + L-serine + ATP = L-seryl-tRNA(Sec) + AMP + diphosphate + H(+). Its pathway is aminoacyl-tRNA biosynthesis; selenocysteinyl-tRNA(Sec) biosynthesis; L-seryl-tRNA(Sec) from L-serine and tRNA(Sec): step 1/1. In terms of biological role, catalyzes the attachment of serine to tRNA(Ser). Is also able to aminoacylate tRNA(Sec) with serine, to form the misacylated tRNA L-seryl-tRNA(Sec), which will be further converted into selenocysteinyl-tRNA(Sec). The protein is Serine--tRNA ligase of Beijerinckia indica subsp. indica (strain ATCC 9039 / DSM 1715 / NCIMB 8712).